A 177-amino-acid polypeptide reads, in one-letter code: VQ motif-containing protein 11 (177 aa).

The short motif at 25 to 34 (FRNIVQKLTG) is the VQ element. A phosphoserine mark is found at Ser-43, Ser-99, Ser-115, Ser-142, and Ser-145. The segment covering 115-133 (SAREEHHAQPDKEEQKAIA) has biased composition (basic and acidic residues). The disordered stretch occupies residues 115-177 (SAREEHHAQP…RIHEDNHRDS (63 aa)). Over residues 148-159 (EPAPELLPLFPL) the composition is skewed to low complexity. Ser-161 bears the Phosphoserine mark. The segment covering 168-177 (RIHEDNHRDS) has biased composition (basic and acidic residues).

Phosphorylated on serine residues by MPK6.

Its subcellular location is the nucleus. Functionally, may modulate WRKY transcription factor activities. This chain is VQ motif-containing protein 11, found in Arabidopsis thaliana (Mouse-ear cress).